Reading from the N-terminus, the 233-residue chain is DNA repair protein RecO (233 aa).

This sequence belongs to the RecO family.

Functionally, involved in DNA repair and RecF pathway recombination. This chain is DNA repair protein RecO, found in Francisella philomiragia subsp. philomiragia (strain ATCC 25017 / CCUG 19701 / FSC 153 / O#319-036).